Here is a 197-residue protein sequence, read N- to C-terminus: MYDKLPPELWVKIVDYSREINLLLVNKNFFELFNLVDIEIDIIDYVIENNLICVLNFIVALKKLEHPIIDKIVVTDLLNKCLIGYCISGRLDIVKYLVILGADIRENDDCVVRTACHNGHIEVVKYLVNQGADIRAYDDDAIRLASKNGHLYVVKYLVSQGVNFRKYNDYEINWASQNGHGSVVDFLVSKGAVLHEK.

4 ANK repeats span residues 78 to 106 (LNKC…DIRE), 107 to 136 (NDDC…DIRA), 138 to 166 (DDDA…NFRK), and 168 to 196 (NDYE…VLHE).

The protein is Putative ankyrin repeat protein R875 of Acanthamoeba polyphaga mimivirus (APMV).